Consider the following 350-residue polypeptide: Small ribosomal subunit biogenesis GTPase RsgA (350 aa).

Positions 1-17 (MSKNKLSKGQQRRVQAN) are enriched in polar residues. Positions 1–35 (MSKNKLSKGQQRRVQANHQRRLRTDRKPELDDSQL) are disordered. Positions 103–273 (TSVLTRPDLY…VIDSPGVREF (171 aa)) constitute a CP-type G domain. GTP-binding positions include 159–162 (NKID) and 213–221 (GQSGVGKSS). Zn(2+) is bound by residues C297, C302, H304, and C310.

Belongs to the TRAFAC class YlqF/YawG GTPase family. RsgA subfamily. In terms of assembly, monomer. Associates with 30S ribosomal subunit, binds 16S rRNA. The cofactor is Zn(2+).

It is found in the cytoplasm. One of several proteins that assist in the late maturation steps of the functional core of the 30S ribosomal subunit. Helps release RbfA from mature subunits. May play a role in the assembly of ribosomal proteins into the subunit. Circularly permuted GTPase that catalyzes slow GTP hydrolysis, GTPase activity is stimulated by the 30S ribosomal subunit. The protein is Small ribosomal subunit biogenesis GTPase RsgA of Yersinia enterocolitica serotype O:8 / biotype 1B (strain NCTC 13174 / 8081).